The primary structure comprises 595 residues: Coronatine-insensitive protein homolog 1a (595 aa).

Positions 20–62 (WVPDEALHLVMGHVEDPRDREAASRVCRRWHRIDALTRKHVTV) constitute an F-box domain. Residues Arg-90, Arg-351, Tyr-389, Arg-412, and Arg-499 each coordinate jasmonate.

Interacts with TIFY6A/JAZ3, TIFY6B/JAZ4 and TIFY11D/JAZ12 in a coronatine-dependent manner. Interacts with TIFY9/JAZ5, TIFY10A/JAZ6, TIFY10B/JAZ7, TIFY11A/JAZ9 and TIFY11C/JAZ11 in a coronatine-dependent manner.

Its function is as follows. Involved in jasmonate (JA) signaling. Required for jasmonate signaling in plant defense responses. Can complement Arabidopsis coi1-1 mutant and restore jasmonate signaling. Required for JA-regulated defense responses to infestation by the leaffolder Cnaphalocrocis medinalis. May act on an initial response of jasmonate-regulated gene expression toward drought tolerance as part of a BHLH148-TIFY11D/JAZ12-COI1A complex. Component of SCF(COI1) E3 ubiquitin ligase complexes, which may mediate the ubiquitination and subsequent proteasomal degradation of target proteins, including TIFY/JAZ family. This is Coronatine-insensitive protein homolog 1a from Oryza sativa subsp. indica (Rice).